The following is a 333-amino-acid chain: Probable G-protein coupled receptor 33 (333 aa).

Residues 1–30 (MDLINSTDYLINASTLVRNSTQFLAPASKM) are Extracellular-facing. N-linked (GlcNAc...) asparagine glycans are attached at residues Asn5, Asn12, and Asn19. The chain crosses the membrane as a helical span at residues 31–53 (IIALSLYISSIIGTITNGLYLWV). Over 54-64 (LRFKMKQTVNT) the chain is Cytoplasmic. A helical membrane pass occupies residues 65 to 86 (LLFFHLILSYFISTMILPFMAT). Topologically, residues 87-103 (SQLQDNHWNFGTALCKV) are extracellular. An intrachain disulfide couples Cys101 to Cys179. The helical transmembrane segment at 104-124 (FNGTLSLGMFTSVFFLSAIGL) threads the bilayer. The Cytoplasmic portion of the chain corresponds to 125–143 (DRYLLTLHPVWSQQHRTPR). A helical membrane pass occupies residues 144–165 (WASSIVLGVWISAAALSIPYLI). The Extracellular portion of the chain corresponds to 166–209 (FRETHHDRKGKVTCQNNYAVSTNWESKEMQASRQWIHVACFISR). Residues 210–230 (FLLGFLLPFFIIIFCYERVAS) traverse the membrane as a helical segment. Over 231 to 246 (KVKERSLFKSSKPFKV) the chain is Cytoplasmic. A helical transmembrane segment spans residues 247 to 268 (MMTAIISFFVCWMPYHIHQGLL). At 269–283 (LTTNQSLLLELTLIL) the chain is on the extracellular side. Asn272 carries an N-linked (GlcNAc...) asparagine glycan. A helical membrane pass occupies residues 284–303 (TVLTTSFNTIFSPTLYLFVG). Residues 304-333 (ENFKKVFKKSILALFESTFSEDSSVERTQT) are Cytoplasmic-facing.

It belongs to the G-protein coupled receptor 1 family. As to expression, expressed in spleen, lung, heart, liver, kidney, pancreas, thymus, gonads and leukocytes.

It localises to the cell membrane. Orphan receptor; could be a chemoattractant receptor. This Homo sapiens (Human) protein is Probable G-protein coupled receptor 33 (GPR33).